The primary structure comprises 301 residues: Transposase InsD for insertion element IS2D (301 aa).

One can recognise an Integrase catalytic domain in the interval 106 to 289; that stretch reads KPAVPPSKRA…SPREYLRQRA (184 aa).

Involved in the transposition of the insertion sequence IS2. The sequence is that of Transposase InsD for insertion element IS2D (insD2) from Escherichia coli (strain K12).